The chain runs to 361 residues: Phosphoserine aminotransferase (361 aa).

R42 is an L-glutamate binding site. Pyridoxal 5'-phosphate-binding positions include 76 to 77, W102, T152, D172, and Q195; that span reads AT. N6-(pyridoxal phosphate)lysine is present on K196. Pyridoxal 5'-phosphate is bound at residue 237-238; the sequence is NT.

Belongs to the class-V pyridoxal-phosphate-dependent aminotransferase family. SerC subfamily. In terms of assembly, homodimer. Pyridoxal 5'-phosphate serves as cofactor.

It is found in the cytoplasm. It catalyses the reaction O-phospho-L-serine + 2-oxoglutarate = 3-phosphooxypyruvate + L-glutamate. The catalysed reaction is 4-(phosphooxy)-L-threonine + 2-oxoglutarate = (R)-3-hydroxy-2-oxo-4-phosphooxybutanoate + L-glutamate. The protein operates within amino-acid biosynthesis; L-serine biosynthesis; L-serine from 3-phospho-D-glycerate: step 2/3. Its pathway is cofactor biosynthesis; pyridoxine 5'-phosphate biosynthesis; pyridoxine 5'-phosphate from D-erythrose 4-phosphate: step 3/5. Functionally, catalyzes the reversible conversion of 3-phosphohydroxypyruvate to phosphoserine and of 3-hydroxy-2-oxo-4-phosphonooxybutanoate to phosphohydroxythreonine. This is Phosphoserine aminotransferase from Stenotrophomonas maltophilia (strain R551-3).